A 279-amino-acid polypeptide reads, in one-letter code: Serine protease 29 (279 aa).

The N-terminal stretch at 1-17 (MLIQLCLTLFFLGCSIA) is a signal peptide. The Peptidase S1 domain maps to 31 to 276 (IVGGHSAPQG…FLPWITQQMQ (246 aa)). Cys62 and Cys78 are joined by a disulfide. Residues His77 and Asp124 each act as charge relay system in the active site. Cystine bridges form between Cys158–Cys234, Cys191–Cys215, and Cys224–Cys252. N-linked (GlcNAc...) asparagine glycosylation is present at Asn197. Ser228 functions as the Charge relay system in the catalytic mechanism. N-linked (GlcNAc...) asparagine glycosylation is present at Asn235.

It belongs to the peptidase S1 family. As to quaternary structure, homooligomer, heterodimer and heterotetramer. Able to form homo- and hetero- tetrameric structures. Heterotetramer is far more stable than the homotetramer. Expressed in embryos and placenta. Found in uterus especially in glandular epithelium during zona lysis and implantation.

Its subcellular location is the secreted. Its function is as follows. Involved in embryo hatching and implantation. In Mus musculus (Mouse), this protein is Serine protease 29 (Prss29).